A 241-amino-acid polypeptide reads, in one-letter code: Lipoprotein-releasing system ATP-binding protein LolD 2 (241 aa).

One can recognise an ABC transporter domain in the interval 6–241 (LDAQQLSKSY…YKSYEKSTAV (236 aa)). An ATP-binding site is contributed by 43 to 50 (GASGSGKT).

It belongs to the ABC transporter superfamily. Lipoprotein translocase (TC 3.A.1.125) family. The complex is composed of two ATP-binding proteins (LolD) and two transmembrane proteins (LolC and LolE).

Its subcellular location is the cell inner membrane. Part of the ABC transporter complex LolCDE involved in the translocation of mature outer membrane-directed lipoproteins, from the inner membrane to the periplasmic chaperone, LolA. Responsible for the formation of the LolA-lipoprotein complex in an ATP-dependent manner. The chain is Lipoprotein-releasing system ATP-binding protein LolD 2 from Chlorobium chlorochromatii (strain CaD3).